A 359-amino-acid chain; its full sequence is uncharacterized protein (359 aa).

This sequence belongs to the glycosyltransferase group 1 family. Glycosyltransferase 4 subfamily.

This is an uncharacterized protein from Bacillus subtilis (strain 168).